The primary structure comprises 347 residues: Aspartate carbamoyltransferase catalytic subunit (347 aa).

Carbamoyl phosphate contacts are provided by Arg-75 and Thr-76. Residue Lys-103 participates in L-aspartate binding. Residues Arg-125, His-153, and Gln-156 each contribute to the carbamoyl phosphate site. Residues Arg-193 and Arg-247 each coordinate L-aspartate. Residues Gly-288 and Pro-289 each coordinate carbamoyl phosphate.

It belongs to the aspartate/ornithine carbamoyltransferase superfamily. ATCase family. Heterododecamer (2C3:3R2) of six catalytic PyrB chains organized as two trimers (C3), and six regulatory PyrI chains organized as three dimers (R2).

The enzyme catalyses carbamoyl phosphate + L-aspartate = N-carbamoyl-L-aspartate + phosphate + H(+). Its pathway is pyrimidine metabolism; UMP biosynthesis via de novo pathway; (S)-dihydroorotate from bicarbonate: step 2/3. Catalyzes the condensation of carbamoyl phosphate and aspartate to form carbamoyl aspartate and inorganic phosphate, the committed step in the de novo pyrimidine nucleotide biosynthesis pathway. The protein is Aspartate carbamoyltransferase catalytic subunit of Erythrobacter litoralis (strain HTCC2594).